A 185-amino-acid chain; its full sequence is Elongation factor P (185 aa).

This sequence belongs to the elongation factor P family.

It localises to the cytoplasm. It functions in the pathway protein biosynthesis; polypeptide chain elongation. In terms of biological role, involved in peptide bond synthesis. Stimulates efficient translation and peptide-bond synthesis on native or reconstituted 70S ribosomes in vitro. Probably functions indirectly by altering the affinity of the ribosome for aminoacyl-tRNA, thus increasing their reactivity as acceptors for peptidyl transferase. In Mesomycoplasma hyopneumoniae (strain J / ATCC 25934 / NCTC 10110) (Mycoplasma hyopneumoniae), this protein is Elongation factor P.